The sequence spans 410 residues: Histidine--tRNA ligase (410 aa).

It belongs to the class-II aminoacyl-tRNA synthetase family.

The protein localises to the cytoplasm. It carries out the reaction tRNA(His) + L-histidine + ATP = L-histidyl-tRNA(His) + AMP + diphosphate + H(+). The protein is Histidine--tRNA ligase of Methanoregula boonei (strain DSM 21154 / JCM 14090 / 6A8).